The following is a 300-amino-acid chain: Solute carrier family 25 member 35 (300 aa).

3 Solcar repeats span residues 1–90 (MDFL…AESR), 100–193 (HSPV…IKDL), and 203–294 (QSWK…LRSF). Transmembrane regions (helical) follow at residues 38-58 (TYQRHYRNVFHAFFTIGKVDG), 59-79 (LAALQKGLGPALLYQFLMNGI), 91-119 (GYLHTNEGTHSPVRSAAAGALAGVMGAYL), 169-190 (AVGGLPRVVIGSSTQLCTFSSI), 205-225 (WKVALAAAMVSGVAIVVAMTP), and 277-300 (LGPHTILSLFFWDQLRSFYNTYAK).

The protein belongs to the mitochondrial carrier (TC 2.A.29) family.

It is found in the mitochondrion inner membrane. The enzyme catalyses a dicarboxylate(in) + sulfate(out) = a dicarboxylate(out) + sulfate(in). Putative antiporter that exchanges dicarboxylates and sulfur oxoanions across the inner membrane of mitochondria. In Mus musculus (Mouse), this protein is Solute carrier family 25 member 35 (Slc25a35).